The primary structure comprises 77 residues: Epoxide hydrolase (77 aa).

In terms of assembly, monomer.

It carries out the reaction an epoxide + H2O = an ethanediol. This enzyme acts on aliphatic epoxides. Its substrates include epichlorohydrin, epibromohydrin, epoxyoctane and styrene epoxide. This chain is Epoxide hydrolase, found in Pseudomonas sp. (strain AD1).